The sequence spans 402 residues: Putative cystathionine beta-lyase (402 aa).

K236 is subject to N6-(pyridoxal phosphate)lysine.

The protein belongs to the class-II pyridoxal-phosphate-dependent aminotransferase family. MalY/PatB cystathionine beta-lyase subfamily. Requires pyridoxal 5'-phosphate as cofactor.

It catalyses the reaction L,L-cystathionine + H2O = L-homocysteine + pyruvate + NH4(+). The enzyme catalyses an S-substituted L-cysteine + H2O = a thiol + pyruvate + NH4(+). It participates in amino-acid biosynthesis; L-methionine biosynthesis via de novo pathway; L-homocysteine from L-cystathionine: step 1/1. This chain is Putative cystathionine beta-lyase, found in Mycobacterium leprae (strain TN).